The chain runs to 439 residues: Probable eukaryotic translation initiation factor 5-1 (439 aa).

29 to 36 (GRGNGIKT) contacts GTP. A disordered region spans residues 143-245 (LKNPPEQKKS…REAAEKRMKE (103 aa)). Basic and acidic residues predominate over residues 147–186 (PEQKKSSKDKKSMRRAEKERLREGEAADEEMRKLKKEAAS). Acidic residues predominate over residues 214–228 (DENDQADSEEDDDDV). At threonine 232 the chain carries Phosphothreonine. A compositionally biased stretch (basic and acidic residues) spans 234-245 (TSREAAEKRMKE). The W2 domain occupies 283-439 (KIPENAHEKL…QNAESESEEE (157 aa)). A phosphoserine mark is found at serine 434 and serine 436.

It belongs to the eIF-2-beta/eIF-5 family.

In terms of biological role, catalyzes the hydrolysis of GTP bound to the 40S ribosomal initiation complex (40S.mRNA.Met-tRNA[F].eIF-2.GTP) with the subsequent joining of a 60S ribosomal subunit resulting in the release of eIF-2 and the guanine nucleotide. The subsequent joining of a 60S ribosomal subunit results in the formation of a functional 80S initiation complex (80S.mRNA.Met-tRNA[F]). This Arabidopsis thaliana (Mouse-ear cress) protein is Probable eukaryotic translation initiation factor 5-1.